The chain runs to 458 residues: ATP synthase subunit beta (458 aa).

148-155 is an ATP binding site; the sequence is GGAGVGKT.

It belongs to the ATPase alpha/beta chains family. F-type ATPases have 2 components, CF(1) - the catalytic core - and CF(0) - the membrane proton channel. CF(1) has five subunits: alpha(3), beta(3), gamma(1), delta(1), epsilon(1). CF(0) has three main subunits: a(1), b(2) and c(9-12). The alpha and beta chains form an alternating ring which encloses part of the gamma chain. CF(1) is attached to CF(0) by a central stalk formed by the gamma and epsilon chains, while a peripheral stalk is formed by the delta and b chains.

It localises to the cell inner membrane. The enzyme catalyses ATP + H2O + 4 H(+)(in) = ADP + phosphate + 5 H(+)(out). Its function is as follows. Produces ATP from ADP in the presence of a proton gradient across the membrane. The catalytic sites are hosted primarily by the beta subunits. This chain is ATP synthase subunit beta, found in Francisella philomiragia subsp. philomiragia (strain ATCC 25017 / CCUG 19701 / FSC 153 / O#319-036).